A 273-amino-acid chain; its full sequence is Large ribosomal subunit protein uL2 (273 aa).

The interval 228–273 is disordered; it reads VDHPHGGGEGKTSGGRHPVTPWGFPTKGKKTRKNKRTSKFIVKKRK. Basic residues predominate over residues 254 to 273; it reads KGKKTRKNKRTSKFIVKKRK.

The protein belongs to the universal ribosomal protein uL2 family. Part of the 50S ribosomal subunit. Forms a bridge to the 30S subunit in the 70S ribosome.

Its function is as follows. One of the primary rRNA binding proteins. Required for association of the 30S and 50S subunits to form the 70S ribosome, for tRNA binding and peptide bond formation. It has been suggested to have peptidyltransferase activity; this is somewhat controversial. Makes several contacts with the 16S rRNA in the 70S ribosome. The chain is Large ribosomal subunit protein uL2 from Rickettsia peacockii (strain Rustic).